Reading from the N-terminus, the 256-residue chain is Hydroxyacylglutathione hydrolase (256 aa).

His-57, His-59, Asp-61, His-62, His-115, Asp-134, and His-172 together coordinate Zn(2+).

It belongs to the metallo-beta-lactamase superfamily. Glyoxalase II family. Monomer. Zn(2+) is required as a cofactor.

It carries out the reaction an S-(2-hydroxyacyl)glutathione + H2O = a 2-hydroxy carboxylate + glutathione + H(+). Its pathway is secondary metabolite metabolism; methylglyoxal degradation; (R)-lactate from methylglyoxal: step 2/2. Functionally, thiolesterase that catalyzes the hydrolysis of S-D-lactoyl-glutathione to form glutathione and D-lactic acid. The sequence is that of Hydroxyacylglutathione hydrolase from Jannaschia sp. (strain CCS1).